The following is a 249-amino-acid chain: Transmembrane protein 150C (249 aa).

The Cytoplasmic portion of the chain corresponds to 1–9 (MDGKKCSVW). Residues 10-30 (MFLPLVFTVFTSAGLWIVYFI) traverse the membrane as a helical segment. The Extracellular segment spans residues 31–64 (AVEDDKIFPLNSAERKPGVKHAPYISIAGDEPPA). Residues 65–85 (SCVFSQVMNMAAFLALVVAVL) traverse the membrane as a helical segment. The Cytoplasmic portion of the chain corresponds to 86–97 (RFIQLKPKVLNP). A helical membrane pass occupies residues 98–118 (WLNISGLVALCLASFGMTLLG). Residues 119–130 (NFQLTNDEEIHN) are Extracellular-facing. The helical transmembrane segment at 131 to 151 (VGTSLTFGFGTLTCWIQAALT) threads the bilayer. Over 152-168 (LKVNIKNEGRKVGIPRV) the chain is Cytoplasmic. A helical membrane pass occupies residues 169–189 (ILSASITLCVVLYFILMAQGI). The Extracellular segment spans residues 190–192 (HMY). Residues 193–213 (AARVQWGLVMCFLSYFGTFAV) form a helical membrane-spanning segment. Over 214–249 (EFRHYRYEIVCSEYQENFLSFSESLSEASEYQTDQV) the chain is Cytoplasmic.

This sequence belongs to the DRAM/TMEM150 family.

Its subcellular location is the cell membrane. It localises to the lysosome membrane. It carries out the reaction Ca(2+)(in) = Ca(2+)(out). It catalyses the reaction Na(+)(in) = Na(+)(out). The catalysed reaction is K(+)(in) = K(+)(out). The enzyme catalyses Mg(2+)(in) = Mg(2+)(out). Its function is as follows. Nonselective cationic channel with high permeability to Ca(2+). Component of a mechanosensitive cation channel. Confers mechanically activated (MA) currents with slow inactivation kinetics. May contribute to proprioception. This Bos taurus (Bovine) protein is Transmembrane protein 150C (TMEM150C).